A 240-amino-acid chain; its full sequence is Ubiquinone biosynthesis O-methyltransferase (240 aa).

S-adenosyl-L-methionine contacts are provided by arginine 44, glycine 64, aspartate 85, and methionine 129.

The protein belongs to the methyltransferase superfamily. UbiG/COQ3 family.

It carries out the reaction a 3-demethylubiquinol + S-adenosyl-L-methionine = a ubiquinol + S-adenosyl-L-homocysteine + H(+). It catalyses the reaction a 3-(all-trans-polyprenyl)benzene-1,2-diol + S-adenosyl-L-methionine = a 2-methoxy-6-(all-trans-polyprenyl)phenol + S-adenosyl-L-homocysteine + H(+). It functions in the pathway cofactor biosynthesis; ubiquinone biosynthesis. In terms of biological role, O-methyltransferase that catalyzes the 2 O-methylation steps in the ubiquinone biosynthetic pathway. In Escherichia coli O9:H4 (strain HS), this protein is Ubiquinone biosynthesis O-methyltransferase.